A 110-amino-acid polypeptide reads, in one-letter code: uncharacterized protein (110 aa).

Its function is as follows. May play a regulatory role in sulfomenaquinone (SMK) biosynthesis. This is an uncharacterized protein from Mycobacterium bovis (strain ATCC BAA-935 / AF2122/97).